A 359-amino-acid polypeptide reads, in one-letter code: Probable C-C chemokine receptor type 3 (359 aa).

The Extracellular segment spans residues Met1 to Ser38. A helical transmembrane segment spans residues Trp39 to Ile64. Over Lys65 to Lys68 the chain is Cytoplasmic. A helical membrane pass occupies residues Leu69–Ile95. Topologically, residues His96–Lys111 are extracellular. Cys110 and Cys187 form a disulfide bridge. The helical transmembrane segment at Met112–Ile133 threads the bilayer. Residues Asp134–Thr150 are Cytoplasmic-facing. A helical transmembrane segment spans residues Val151–Phe175. At His176–Arg201 the chain is on the extracellular side. Residues Phe202–Ile227 form a helical membrane-spanning segment. The Cytoplasmic portion of the chain corresponds to Lys228–Arg243. The helical transmembrane segment at Leu244–Phe268 threads the bilayer. The Extracellular segment spans residues His269–Leu285. A helical membrane pass occupies residues Ala286–Gly309. The Cytoplasmic segment spans residues Glu310–Phe359.

Belongs to the G-protein coupled receptor 1 family. In terms of tissue distribution, detected in skeletal muscle and in trace amounts in leukocytes.

Its subcellular location is the cell membrane. Receptor for C-C type chemokine. Binds and responds to a variety of chemokines, including CCL11, CCL26, CCL7, CCL13, RANTES(CCL5) and CCL15. Subsequently transduces a signal by increasing the intracellular calcium ions level. In addition acts as a possible functional receptor for NARS1. The chain is Probable C-C chemokine receptor type 3 (Ccr3) from Mus musculus (Mouse).